The chain runs to 569 residues: Glutamate--tRNA ligase (569 aa).

The 'HIGH' region signature appears at 107–117; that stretch reads PEPNGYPHIGH.

It belongs to the class-I aminoacyl-tRNA synthetase family. Glutamate--tRNA ligase type 2 subfamily.

It is found in the cytoplasm. The enzyme catalyses tRNA(Glu) + L-glutamate + ATP = L-glutamyl-tRNA(Glu) + AMP + diphosphate. Catalyzes the attachment of glutamate to tRNA(Glu) in a two-step reaction: glutamate is first activated by ATP to form Glu-AMP and then transferred to the acceptor end of tRNA(Glu). The chain is Glutamate--tRNA ligase from Nitrosopumilus maritimus (strain SCM1).